The sequence spans 198 residues: Ribonuclease HII (198 aa).

The 189-residue stretch at 10 to 198 (HLVAGVDEVG…PVRRALGIAS (189 aa)) folds into the RNase H type-2 domain. The a divalent metal cation site is built by aspartate 16, glutamate 17, and aspartate 108.

It belongs to the RNase HII family. The cofactor is Mn(2+). It depends on Mg(2+) as a cofactor.

Its subcellular location is the cytoplasm. The enzyme catalyses Endonucleolytic cleavage to 5'-phosphomonoester.. Its function is as follows. Endonuclease that specifically degrades the RNA of RNA-DNA hybrids. The polypeptide is Ribonuclease HII (Cronobacter sakazakii (strain ATCC BAA-894) (Enterobacter sakazakii)).